Here is a 258-residue protein sequence, read N- to C-terminus: UPF0246 protein mma_1385 (258 aa).

The protein belongs to the UPF0246 family.

The chain is UPF0246 protein mma_1385 from Janthinobacterium sp. (strain Marseille) (Minibacterium massiliensis).